The primary structure comprises 522 residues: Sensory neuron membrane protein 1 (522 aa).

Over methionine 1–alanine 11 the chain is Cytoplasmic. A helical membrane pass occupies residues glycine 12–leucine 32. Over lysine 33 to alanine 455 the chain is Extracellular. N-linked (GlcNAc...) asparagine glycosylation is found at asparagine 67 and asparagine 229. Intrachain disulfides connect cysteine 268/cysteine 333, cysteine 297/cysteine 350, and cysteine 335/cysteine 339. Asparagine 438 is a glycosylation site (N-linked (GlcNAc...) asparagine). A helical membrane pass occupies residues valine 456–isoleucine 476. Residues tyrosine 477–methionine 522 lie on the Cytoplasmic side of the membrane.

Belongs to the CD36 family.

The protein resides in the cell membrane. Its function is as follows. Plays an olfactory role that is not restricted to pheromone sensitivity. The protein is Sensory neuron membrane protein 1 of Plutella xylostella (Diamondback moth).